The following is a 453-amino-acid chain: Serine protease HTRA3 (453 aa).

The N-terminal stretch at 1–17 (MQARALLLAALAALALA) is a signal peptide. Positions 21–84 (PAAPCPARCD…ECVRGLCRCR (64 aa)) constitute an IGFBP N-terminal domain. 8 disulfide bridges follow: Cys25-Cys48, Cys29-Cys50, Cys34-Cys51, Cys39-Cys54, Cys62-Cys76, Cys70-Cys81, Cys83-Cys101, and Cys90-Cys126. One can recognise a Kazal-like domain in the interval 64-128 (GPLDSPCGES…RQLQKGACPL (65 aa)). The tract at residues 175-340 (GSGFIMSEAG…AIPSDRITRF (166 aa)) is serine protease. Catalysis depends on charge relay system residues His191, Asp227, and Ser305. One can recognise a PDZ domain in the interval 359–444 (IRMRTITPSL…EVRRGNDDLL (86 aa)).

This sequence belongs to the peptidase S1C family. In terms of assembly, homotrimer. Interacts with TGFB1; the interaction inhibits TGFB-mediated signaling. Interacts with BMP4; the interaction inhibits BMP4-mediated signaling. Interacts with TGFB2 and GDF5. Interacts with MYH9. Widely expressed, with highest levels in both adult and fetal heart, ovary, uterus placenta, and bladder. In the endometrium, expressed in epithelial glands and the stroma. Also present in leukocytes. Isoform 1 is predominant in heart and skeletal muscle, whereas isoform 2 is predominant in placenta and kidney.

It localises to the secreted. Its function is as follows. Serine protease that cleaves beta-casein/CSN2 as well as several extracellular matrix (ECM) proteoglycans such as decorin/DCN, biglycan/BGN and fibronectin/FN1. Inhibits signaling mediated by TGF-beta family proteins possibly indirectly by degradation of these ECM proteoglycans. May act as a tumor suppressor. Negatively regulates, in vitro, trophoblast invasion during placental development and may be involved in the development of the placenta in vivo. May also have a role in ovarian development, granulosa cell differentiation and luteinization. This Homo sapiens (Human) protein is Serine protease HTRA3 (HTRA3).